The sequence spans 139 residues: Histone H2B (139 aa).

Residues 1–10 (MAPKVAEKKP) show a composition bias toward basic and acidic residues. The segment at 1 to 47 (MAPKVAEKKPSLAGKAPAGKAPAEKKEAGKKTTTATGEKKKRTKARK) is disordered. K8 and K9 each carry N6-acetyllysine; alternate. Glycyl lysine isopeptide (Lys-Gly) (interchain with G-Cter in SUMO); alternate cross-links involve residues K8 and K9. N6-acetyllysine is present on K15. The residue at position 25 (K25) is an N6-acetyllysine; alternate. A Glycyl lysine isopeptide (Lys-Gly) (interchain with G-Cter in SUMO); alternate cross-link involves residue K25. K26 participates in a covalent cross-link: Glycyl lysine isopeptide (Lys-Gly) (interchain with G-Cter in SUMO). A Glycyl lysine isopeptide (Lys-Gly) (interchain with G-Cter in ubiquitin) cross-link involves residue K133.

Belongs to the histone H2B family. The nucleosome is a histone octamer containing two molecules each of H2A, H2B, H3 and H4 assembled in one H3-H4 heterotetramer and two H2A-H2B heterodimers. The octamer wraps approximately 147 bp of DNA. In terms of processing, monoubiquitinated by the UBC2-BRE1 complex to form H2BK123ub1. H2BK123ub1 gives a specific tag for epigenetic transcriptional activation and is also prerequisite for H3K4me and H3K79me formation. H2BK123ub1 also modulates the formation of double-strand breaks during meiosis and is a prerequisite for DNA-damage checkpoint activation. Post-translationally, acetylated by GCN5 to form H2BK11ac and H2BK16ac. H2BK16ac can also be formed by ESA1. Acetylation of N-terminal lysines and particularly formation of H2BK11acK16ac has a positive effect on transcription. Sumoylation to form H2BK6su or H2BK7su, and probably also H2BK16su or H2BK17su, occurs preferentially near the telomeres and represses gene transcription.

The protein localises to the nucleus. It localises to the chromosome. In terms of biological role, core component of nucleosome. Nucleosomes wrap and compact DNA into chromatin, limiting DNA accessibility to the cellular machineries which require DNA as a template. Histones thereby play a central role in transcription regulation, DNA repair, DNA replication and chromosomal stability. DNA accessibility is regulated via a complex set of post-translational modifications of histones, also called histone code, and nucleosome remodeling. This chain is Histone H2B (HTB1), found in Yarrowia lipolytica (strain CLIB 122 / E 150) (Yeast).